A 680-amino-acid chain; its full sequence is DNA ligase (680 aa).

NAD(+) is bound by residues 38–42 (DAEYD), 87–88 (SL), and Glu119. Lys121 acts as the N6-AMP-lysine intermediate in catalysis. NAD(+) is bound by residues Arg142, Glu179, Lys296, and Lys320. The Zn(2+) site is built by Cys414, Cys417, Cys432, and Cys438. Positions 597–680 (IEDLPLKGLT…DLLRKHGRLE (84 aa)) constitute a BRCT domain.

The protein belongs to the NAD-dependent DNA ligase family. LigA subfamily. It depends on Mg(2+) as a cofactor. The cofactor is Mn(2+).

The catalysed reaction is NAD(+) + (deoxyribonucleotide)n-3'-hydroxyl + 5'-phospho-(deoxyribonucleotide)m = (deoxyribonucleotide)n+m + AMP + beta-nicotinamide D-nucleotide.. Its function is as follows. DNA ligase that catalyzes the formation of phosphodiester linkages between 5'-phosphoryl and 3'-hydroxyl groups in double-stranded DNA using NAD as a coenzyme and as the energy source for the reaction. It is essential for DNA replication and repair of damaged DNA. This chain is DNA ligase, found in Cellvibrio japonicus (strain Ueda107) (Pseudomonas fluorescens subsp. cellulosa).